Here is a 664-residue protein sequence, read N- to C-terminus: MDNKLEKMKELVEELNQYAYEYYVLDNPSISDKEYDLKYDELVILEKKTEVTLPYSPTQRVGDKILGEFSKYTHKGRLWSLDKAQNMEQLIEWHNRNLKVIEQYNSMSEDKLPELRYIVTKKFDGLTVNCTYDENGILIKSATRGTGIIGEDITAQIKTIKTVPLKIKNNHVIEVHGEAIMTKTAFEEYNKAAQVPLKNLRNGAAGALRNLDIKETARRNLSAFFYDVGYNEGPEFKSYREMMNFIKNMGLPQDKYIKECTNMEEVEKEIEYIESIRGELDYDIDGAVIVVDDIKTREILGYTIKFPKWAIAYKFEAKEITTKLLDVEWNVGRSGRVTPTALLEPVELGGVTVKRATLNNMDDIKRKNVKLGAKVLVRRSNDVIPEIMGVVEESLEESEEIQAPDRCPYCNSHLVQNGVHYYCENTLSCKPQMVKSIVHFASREAMNIAGFSEKTAEQLFEKLDIKSIADLYKIKKEELLTLEKFKDKKSQNLIDAIQNSKNCDLASFIYALGIPNVGKKTANDLVMKFKTLESIKNTTIEQLVEVPDVGEIVAKSIYDFFEDEKIISNIEELLNLGVKPYYEEERIDENPFMGKTIVVTGSLNNYSRGEIKDKLQSLGAKVSSSVSKNTDYVLVGEKPGSKYEKAIELGVKVINEEEFSNKIK.

NAD(+)-binding positions include 32–36 and 80–81; these read DKEYD and SL. Lys-122 functions as the N6-AMP-lysine intermediate in the catalytic mechanism. Residues Arg-144, Glu-178, and Lys-314 each coordinate NAD(+). Zn(2+)-binding residues include Cys-407, Cys-410, Cys-423, and Cys-429. In terms of domain architecture, BRCT spans 587 to 664; the sequence is IDENPFMGKT…NEEEFSNKIK (78 aa).

Belongs to the NAD-dependent DNA ligase family. LigA subfamily. The cofactor is Mg(2+). Mn(2+) is required as a cofactor.

The enzyme catalyses NAD(+) + (deoxyribonucleotide)n-3'-hydroxyl + 5'-phospho-(deoxyribonucleotide)m = (deoxyribonucleotide)n+m + AMP + beta-nicotinamide D-nucleotide.. Its function is as follows. DNA ligase that catalyzes the formation of phosphodiester linkages between 5'-phosphoryl and 3'-hydroxyl groups in double-stranded DNA using NAD as a coenzyme and as the energy source for the reaction. It is essential for DNA replication and repair of damaged DNA. This is DNA ligase from Clostridium botulinum (strain Kyoto / Type A2).